The sequence spans 89 residues: Large ribosomal subunit protein bL27 (89 aa).

The disordered stretch occupies residues 1–24; that stretch reads MAHKKGTGSTRNGRDSNSKRLGVK.

The protein belongs to the bacterial ribosomal protein bL27 family.

In Synechococcus sp. (strain WH7803), this protein is Large ribosomal subunit protein bL27.